A 225-amino-acid polypeptide reads, in one-letter code: Octanoyltransferase (225 aa).

The BPL/LPL catalytic domain maps to 37–217 (SDTPDEFWVV…ELASLIGYQT (181 aa)). Substrate contacts are provided by residues 76-83 (RGGQVTYH), 148-150 (SLG), and 161-163 (GLA). Cys-179 acts as the Acyl-thioester intermediate in catalysis.

Belongs to the LipB family.

It is found in the cytoplasm. The enzyme catalyses octanoyl-[ACP] + L-lysyl-[protein] = N(6)-octanoyl-L-lysyl-[protein] + holo-[ACP] + H(+). It functions in the pathway protein modification; protein lipoylation via endogenous pathway; protein N(6)-(lipoyl)lysine from octanoyl-[acyl-carrier-protein]: step 1/2. Functionally, catalyzes the transfer of endogenously produced octanoic acid from octanoyl-acyl-carrier-protein onto the lipoyl domains of lipoate-dependent enzymes. Lipoyl-ACP can also act as a substrate although octanoyl-ACP is likely to be the physiological substrate. The protein is Octanoyltransferase of Aeromonas salmonicida (strain A449).